The sequence spans 719 residues: Protein psiI (719 aa).

The signal sequence occupies residues 1–19 (MKIIFNLLILFSLVNFINS). Residues 20-658 (QSTTQATTLK…ICQTGAIVST (639 aa)) lie on the Extracellular side of the membrane. N-linked (GlcNAc...) asparagine glycans are attached at residues Asn-62, Asn-105, Asn-118, Asn-151, Asn-315, Asn-379, Asn-454, Asn-488, Asn-500, Asn-538, Asn-592, and Asn-629. Residues 119 to 261 (LTLNPSTGTY…YDYCGVCYGD (143 aa)) enclose the PA14 domain. Residues 659-679 (AVVASVVVVGAVVLGAAIFAG) traverse the membrane as a helical segment. Topologically, residues 680–719 (KKGYDHWKANQGQVFASSNANPLYQQSNNGGENALFEAPQ) are cytoplasmic.

The protein belongs to the prespore-cell-inducing factor family.

The protein resides in the membrane. In Dictyostelium discoideum (Social amoeba), this protein is Protein psiI (psiI).